Consider the following 482-residue polypeptide: 2-succinylbenzoate--CoA ligase (482 aa).

This sequence belongs to the ATP-dependent AMP-binding enzyme family. MenE subfamily.

It catalyses the reaction 2-succinylbenzoate + ATP + CoA = 2-succinylbenzoyl-CoA + AMP + diphosphate. The protein operates within quinol/quinone metabolism; 1,4-dihydroxy-2-naphthoate biosynthesis; 1,4-dihydroxy-2-naphthoate from chorismate: step 5/7. It participates in quinol/quinone metabolism; menaquinone biosynthesis. In terms of biological role, converts 2-succinylbenzoate (OSB) to 2-succinylbenzoyl-CoA (OSB-CoA). This is 2-succinylbenzoate--CoA ligase from Bacillus cereus (strain AH820).